We begin with the raw amino-acid sequence, 428 residues long: Enolase (428 aa).

Residue Q165 coordinates (2R)-2-phosphoglycerate. Residue E207 is the Proton donor of the active site. D244, E285, and D312 together coordinate Mg(2+). Positions 337, 366, 367, and 388 each coordinate (2R)-2-phosphoglycerate. The active-site Proton acceptor is K337.

It belongs to the enolase family. In terms of assembly, component of the RNA degradosome, a multiprotein complex involved in RNA processing and mRNA degradation. It depends on Mg(2+) as a cofactor.

It localises to the cytoplasm. Its subcellular location is the secreted. It is found in the cell surface. The enzyme catalyses (2R)-2-phosphoglycerate = phosphoenolpyruvate + H2O. It participates in carbohydrate degradation; glycolysis; pyruvate from D-glyceraldehyde 3-phosphate: step 4/5. Catalyzes the reversible conversion of 2-phosphoglycerate (2-PG) into phosphoenolpyruvate (PEP). It is essential for the degradation of carbohydrates via glycolysis. In Coxiella burnetii (strain Dugway 5J108-111), this protein is Enolase.